Consider the following 57-residue polypeptide: uncharacterized protein (57 aa).

Positions 9-45 (NWQEEIRKIIIERVRREAKKRLLEETRKLRMEMKSSK) form a coiled coil.

This is an uncharacterized protein from Archaeoglobus fulgidus (strain ATCC 49558 / DSM 4304 / JCM 9628 / NBRC 100126 / VC-16).